Here is a 708-residue protein sequence, read N- to C-terminus: Homeobox-leucine zipper protein HDG10 (708 aa).

Residues 1 to 24 (MDSSHNDSSSDEEGIDSNNRRHHS) are disordered. Residues 16–75 (DSNNRRHHSNHQVQRLEAFFHECPHPDDSQRRQLGNELNLKHKQIKFWFQNRRTQARIHN) constitute a DNA-binding region (homeobox). Residues 119-141 (LCNLQKLRTKNVILKTEYERLSS) are a coiled coil. A disordered region spans residues 162–188 (GPSTYGSTSNNRPASYGSSSNHLPQQS). The span at 165-188 (TYGSTSNNRPASYGSSSNHLPQQS) shows a compositional bias: polar residues. Residues 218–456 (SQLEKNRMFE…LQRMCERLSL (239 aa)) enclose the START domain.

This sequence belongs to the HD-ZIP homeobox family. Class IV subfamily. As to quaternary structure, interacts with ANT, BBM and AIL1. As to expression, expressed in exclusively in anthers with highest levels in the tapetum and pollen grains.

It localises to the nucleus. Functionally, probable transcription factor. This chain is Homeobox-leucine zipper protein HDG10, found in Arabidopsis thaliana (Mouse-ear cress).